The primary structure comprises 394 residues: Elongation factor Tu (394 aa).

Residues 10–204 (KPHVNIGTIG…AVDSYIPQPV (195 aa)) form the tr-type G domain. The G1 stretch occupies residues 19–26 (GHVDHGKT). 19-26 (GHVDHGKT) contributes to the GTP binding site. Residue Thr26 participates in Mg(2+) binding. Positions 60–64 (GITIS) are G2. The segment at 81–84 (DCPG) is G3. GTP contacts are provided by residues 81–85 (DCPGH) and 136–139 (NKVD). Positions 136–139 (NKVD) are G4. Residues 174–176 (SAL) form a G5 region.

Belongs to the TRAFAC class translation factor GTPase superfamily. Classic translation factor GTPase family. EF-Tu/EF-1A subfamily. In terms of assembly, monomer.

It is found in the cytoplasm. The enzyme catalyses GTP + H2O = GDP + phosphate + H(+). GTP hydrolase that promotes the GTP-dependent binding of aminoacyl-tRNA to the A-site of ribosomes during protein biosynthesis. The polypeptide is Elongation factor Tu (Rickettsia helvetica).